Consider the following 710-residue polypeptide: Adenylosuccinate synthetase (710 aa).

The disordered stretch occupies residues 1-54 (MPVRRYGGRYNSSSPGVSNALNPSRTAGWPLSPSPATGSKPASTHHDPVPQEAY). Residues 10 to 25 (YNSSSPGVSNALNPSR) show a composition bias toward polar residues. Residues 44-54 (THHDPVPQEAY) show a composition bias toward basic and acidic residues. Residues 180 to 186 (GDEGKGK) and 210 to 212 (GHT) each bind GTP. Asp181 functions as the Proton acceptor in the catalytic mechanism. Residues Asp181 and Gly210 each contribute to the Mg(2+) site. IMP is bound by residues 181–184 (DEGK), 208–211 (NAGH), Thr295, Lys309, Gln421, Thr437, and Lys567. His211 serves as the catalytic Proton donor. 563–569 (AVTKKPR) contacts substrate. Residues Arg569 and 697–699 (GNG) each bind GTP.

Belongs to the adenylosuccinate synthetase family. In terms of assembly, homodimer. Mg(2+) is required as a cofactor.

It is found in the cytoplasm. It carries out the reaction IMP + L-aspartate + GTP = N(6)-(1,2-dicarboxyethyl)-AMP + GDP + phosphate + 2 H(+). It functions in the pathway purine metabolism; AMP biosynthesis via de novo pathway; AMP from IMP: step 1/2. Plays an important role in the salvage pathway for purine nucleotide biosynthesis. Catalyzes the first committed step in the biosynthesis of AMP from IMP. In Leishmania major, this protein is Adenylosuccinate synthetase.